The chain runs to 217 residues: Phosphatase MT3486 (217 aa).

D9 functions as the Nucleophile in the catalytic mechanism.

Belongs to the HAD-like hydrolase superfamily.

Its function is as follows. Able to hydrolyze geranyl diphosphate (GPP), farnesyl diphosphate (FPP) and geranylgeranyl diphosphate (GGPP) to respectively yield geraniol, farnesol and geranylgeraniol. This chain is Phosphatase MT3486, found in Mycobacterium tuberculosis (strain CDC 1551 / Oshkosh).